The chain runs to 162 residues: Balbiani ring protein 2 (162 aa).

A last constant region region spans residues 1-31; the sequence is CDDAMRKTESDKCTNIGGKFDPSTCKCTPET. Residues 32–51 are last Cys-1 repeat; it reads VTEGPTTCLESSESDEVTTK. Residues 52-162 form a unique region region; sequence KPCDCTCAPD…VKGLEDILNS (111 aa).

Salivary gland.

It is found in the secreted. In terms of biological role, used by the larvae to construct a supramolecular structure, the larval tube. This Chironomus pallidivittatus (Midge) protein is Balbiani ring protein 2 (BR2).